The following is a 447-amino-acid chain: Argininosuccinate synthase (447 aa).

ATP contacts are provided by residues 17-25 (AFSGGLDTS) and alanine 43. Residue tyrosine 99 participates in L-citrulline binding. Glycine 129 and threonine 131 together coordinate ATP. Positions 131, 135, and 136 each coordinate L-aspartate. L-citrulline is bound at residue asparagine 135. Residue aspartate 136 coordinates ATP. The L-citrulline site is built by arginine 139 and serine 192. Aspartate 194 provides a ligand contact to ATP. 3 residues coordinate L-citrulline: threonine 201, glutamate 203, and glutamate 280.

This sequence belongs to the argininosuccinate synthase family. Type 2 subfamily. Homotetramer.

The protein localises to the cytoplasm. It catalyses the reaction L-citrulline + L-aspartate + ATP = 2-(N(omega)-L-arginino)succinate + AMP + diphosphate + H(+). The protein operates within amino-acid biosynthesis; L-arginine biosynthesis; L-arginine from L-ornithine and carbamoyl phosphate: step 2/3. The chain is Argininosuccinate synthase from Escherichia coli (strain K12 / MC4100 / BW2952).